Reading from the N-terminus, the 357-residue chain is Probable leucine aminopeptidase ARB_00576 (357 aa).

Residues methionine 1–alanine 15 form the signal peptide. The N-linked (GlcNAc...) asparagine glycan is linked to asparagine 76. The Zn(2+) site is built by histidine 167 and aspartate 185. The interval aspartate 169 to serine 188 is disordered. Residue asparagine 186 is glycosylated (N-linked (GlcNAc...) asparagine). Residues glutamate 224 and aspartate 251 each contribute to the Zn(2+) site. The N-linked (GlcNAc...) asparagine glycan is linked to asparagine 269. The cysteines at positions 291 and 295 are disulfide-linked. Histidine 324 is a binding site for Zn(2+).

It belongs to the peptidase M28 family. M28E subfamily. In terms of assembly, monomer. Zn(2+) is required as a cofactor.

Its subcellular location is the secreted. In terms of biological role, probable extracellular aminopeptidase which contributes to pathogenicity. The sequence is that of Probable leucine aminopeptidase ARB_00576 from Arthroderma benhamiae (strain ATCC MYA-4681 / CBS 112371) (Trichophyton mentagrophytes).